Consider the following 179-residue polypeptide: Diphosphoinositol polyphosphate phosphohydrolase 2 (179 aa).

Substrate contacts are provided by residues arginine 9, 17 to 19 (KKR), and 38 to 40 (SSR). One can recognise a Nudix hydrolase domain in the interval 17–143 (KKRAACLCFR…VHAEYLERLK (127 aa)). Glycine 49 and glutamate 65 together coordinate Mg(2+). The short motif at 50–71 (GGVEPEEEPGGAAAREVYEEAG) is the Nudix box element. Glutamate 68 acts as the Proton acceptor in catalysis. Glutamate 69 lines the Mg(2+) pocket. Residues 88–90 (RKH), arginine 114, and lysine 132 contribute to the substrate site.

This sequence belongs to the Nudix hydrolase family. DIPP subfamily. Mg(2+) serves as cofactor. Mn(2+) is required as a cofactor.

The protein localises to the cytoplasm. The catalysed reaction is diphospho-myo-inositol polyphosphate + H2O = myo-inositol polyphosphate + phosphate.. It carries out the reaction 5-diphospho-1D-myo-inositol 1,2,3,4,6-pentakisphosphate + H2O = 1D-myo-inositol hexakisphosphate + phosphate + H(+). The enzyme catalyses 3,5-bis(diphospho)-1D-myo-inositol 1,2,4,6-tetrakisphosphate + H2O = 3-diphospho-1D-myo-inositol 1,2,4,5,6-pentakisphosphate + phosphate + 2 H(+). It catalyses the reaction 5-diphospho-1D-myo-inositol 1,3,4,6-tetrakisphosphate + H2O = 1D-myo-inositol 1,3,4,5,6-pentakisphosphate + phosphate + H(+). The catalysed reaction is P(1),P(6)-bis(5'-adenosyl) hexaphosphate + H2O = 2 ATP + 2 H(+). It carries out the reaction P(1),P(5)-bis(5'-adenosyl) pentaphosphate + H2O = ADP + ATP + 2 H(+). The enzyme catalyses 5-phospho-alpha-D-ribose 1-diphosphate + H2O = alpha-D-ribose 1,5-bisphosphate + phosphate + H(+). In terms of biological role, cleaves the beta-phosphate from diphosphoinositol polyphosphates such as PP-InsP5 (diphosphoinositol pentakisphosphate), PP-InsP4 (diphosphoinositol tetrakisphosphate) and [PP]2-InsP4 (bisdiphosphoinositol tetrakisphosphate), suggesting that it may play a role in signal transduction. Diadenosine polyphosphates, particularly Ap6A (P(1),P(6)-bis(5a-adenosyl) hexaphosphate) and Ap5A (P(1),P(5)-bis(5'-adenosyl) pentaphosphate) are downstream effectors of a signaling cascade that regulates cardiac KATP channels, can also be substrates, although with lower preference than the diphosphoinositol polyphosphates. Can also catalyze the hydrolysis of 5-phosphoribose 1-diphosphate, generating the glycolytic activator ribose 1,5-bisphosphate. Does not play a role in U8 snoRNA decapping activity. Binds U8 snoRNA. This is Diphosphoinositol polyphosphate phosphohydrolase 2 from Rattus norvegicus (Rat).